We begin with the raw amino-acid sequence, 318 residues long: V-set and immunoglobulin domain-containing protein 1 (318 aa).

Residues 1 to 19 (MSFLLFITLGLSLTALSHC) form the signal peptide. In terms of domain architecture, Ig-like V-type spans 20 to 131 (VQVTIQNPII…SSGQGKILLT (112 aa)). Residues 20–233 (VQVTIQNPII…TGGEGGVIAA (214 aa)) lie on the Extracellular side of the membrane. 2 disulfides stabilise this stretch: cysteine 41–cysteine 114 and cysteine 157–cysteine 207. An Ig-like C2-type domain is found at 136-223 (PSVPHCSIRG…GNATCELNLH (88 aa)). Residues 234–254 (AVIGGLLAAAIIIAIVWFLVV) form a helical membrane-spanning segment. The Cytoplasmic portion of the chain corresponds to 255-318 (KRKQKKQLPP…ANGETEEPTA (64 aa)). The tract at residues 261–318 (QLPPTKEMKTGGNQYMAVSGEANEPPKENLGASEPTETIQFHDHAENAANGETEEPTA) is disordered.

As to expression, expressed in thymocytes.

It localises to the membrane. The protein is V-set and immunoglobulin domain-containing protein 1 (vsig1) of Xenopus laevis (African clawed frog).